We begin with the raw amino-acid sequence, 356 residues long: Butyrate kinase 2 (356 aa).

It belongs to the acetokinase family. Homodimer.

The protein resides in the cytoplasm. The catalysed reaction is butanoate + ATP = butanoyl phosphate + ADP. It participates in lipid metabolism; butanoate metabolism. Its function is as follows. Catalyzes the conversion of butyryl-CoA through butyryl phosphate to butyrate. The sequence is that of Butyrate kinase 2 (buk2) from Clostridium acetobutylicum (strain ATCC 824 / DSM 792 / JCM 1419 / IAM 19013 / LMG 5710 / NBRC 13948 / NRRL B-527 / VKM B-1787 / 2291 / W).